The following is a 60-amino-acid chain: LQCNKLVPIASKTCPPGKNLCYKMFMVSDLTIPVKRGCIDVCPKNSLLVKYECCNTDRCN.

Cystine bridges form between C3–C21, C14–C38, C42–C53, and C54–C59.

This sequence belongs to the three-finger toxin family. Short-chain subfamily. Type IA cytotoxin sub-subfamily. In terms of assembly, monomer in solution; Homodimer and oligomer in the presence of negatively charged lipids forming a pore with a size ranging between 20 and 30 Angstroms. Expressed by the venom gland.

The protein localises to the secreted. Its subcellular location is the target cell membrane. In terms of biological role, shows cytolytic activity on many different cells by forming pore in lipid membranes. In vivo, increases heart rate or kills the animal by cardiac arrest. In addition, it binds to heparin with high affinity, interacts with Kv channel-interacting protein 1 (KCNIP1) in a calcium-independent manner, and binds to integrin alpha-V/beta-3 (ITGAV/ITGB3) with moderate affinity. Preferentially binds acidic phospholipids like phosphatidylserine, phosphatidic acid and phosphatidyl glycerol. Has hemolytic activity towards human erythrocytes (EC(50)=1.024 uM) and cytolytic activity towards various cell lines. This Naja naja (Indian cobra) protein is Cytotoxin 2a.